A 251-amino-acid chain; its full sequence is uncharacterized protein (251 aa).

Residues 207–251 form a disordered region; that stretch reads ATPHSKRGRTKLYRKEPPGDNRSPPPWQEPHGEGLAEKLSPGPAR.

This is an uncharacterized protein from Treponema pallidum (strain Nichols).